The primary structure comprises 369 residues: Caffeine synthase 1 (369 aa).

Tyr-24 contributes to the S-adenosyl-L-homocysteine binding site. Caffeine is bound at residue Thr-31. 6 residues coordinate S-adenosyl-L-homocysteine: Cys-66, Asn-71, Asp-103, Leu-104, Ser-138, and Phe-139. 3 residues coordinate caffeine: Tyr-156, His-159, and Trp-160. Residue Asn-177 coordinates Mg(2+). Arg-225 contributes to the caffeine binding site. Mg(2+) contacts are provided by Asp-263, Phe-265, and Asn-266. Caffeine is bound at residue Phe-321.

This sequence belongs to the methyltransferase superfamily. Type-7 methyltransferase family. Requires Mg(2+) as cofactor.

It carries out the reaction theobromine + S-adenosyl-L-methionine = caffeine + S-adenosyl-L-homocysteine + H(+). It catalyses the reaction 7-methylxanthine + S-adenosyl-L-methionine = theobromine + S-adenosyl-L-homocysteine + H(+). It participates in alkaloid biosynthesis. In terms of biological role, involved in the biosynthesis of caffeine. Catalyzes the conversion of 7-methylxanthine (7mX) to theobromine and of theobromine to caffeine. The polypeptide is Caffeine synthase 1 (Camellia crassicolumna (Evergreen tea)).